The chain runs to 418 residues: tRNA-2-methylthio-N(6)-dimethylallyladenosine synthase (418 aa).

The MTTase N-terminal domain maps to 2–118; sequence PGYYLWTIGC…WGEIPEGFIL (117 aa). [4Fe-4S] cluster contacts are provided by Cys11, Cys47, Cys81, Cys134, Cys138, and Cys141. A Radical SAM core domain is found at 120–352; it reads LKPPVSASIT…DLQKETVSKA (233 aa). The 61-residue stretch at 354 to 414 folds into the TRAM domain; the sequence is SALVDTFAEV…PWSLQAKLVK (61 aa).

The protein belongs to the methylthiotransferase family. MiaB subfamily. Monomer. [4Fe-4S] cluster is required as a cofactor.

It is found in the cytoplasm. It carries out the reaction N(6)-dimethylallyladenosine(37) in tRNA + (sulfur carrier)-SH + AH2 + 2 S-adenosyl-L-methionine = 2-methylsulfanyl-N(6)-dimethylallyladenosine(37) in tRNA + (sulfur carrier)-H + 5'-deoxyadenosine + L-methionine + A + S-adenosyl-L-homocysteine + 2 H(+). Its function is as follows. Catalyzes the methylthiolation of N6-(dimethylallyl)adenosine (i(6)A), leading to the formation of 2-methylthio-N6-(dimethylallyl)adenosine (ms(2)i(6)A) at position 37 in tRNAs that read codons beginning with uridine. The sequence is that of tRNA-2-methylthio-N(6)-dimethylallyladenosine synthase from Dehalococcoides mccartyi (strain ATCC BAA-2266 / KCTC 15142 / 195) (Dehalococcoides ethenogenes (strain 195)).